The sequence spans 1336 residues: Coiled-coil and C2 domain-containing protein 2A (1336 aa).

Disordered stretches follow at residues Met1–Val29 and Val70–Ile97. Residues Lys8 to Arg23 are compositionally biased toward basic residues. A compositionally biased stretch (acidic residues) spans Val70 to Thr89. A coiled-coil region spans residues Leu136–Gln156. Residues Pro755–Ile915 enclose the C2 domain.

As to quaternary structure, probable component of the tectonic-like complex (also named MKS complex), composed of B9d1, B9d2, Cc2d2a, Mks1 and tctn. In terms of tissue distribution, expressed in the antennae of chordotonal neurons and male germ cells (at protein level).

The protein localises to the cytoplasm. It is found in the cytoskeleton. Its subcellular location is the cilium basal body. The protein resides in the microtubule organizing center. It localises to the centrosome. The protein localises to the centriole. Probable component of the tectonic-like complex (also named MKS complex), a complex localized at the transition zone of primary cilia. Required for ciliary structure and function. This Drosophila melanogaster (Fruit fly) protein is Coiled-coil and C2 domain-containing protein 2A.